The sequence spans 118 residues: Protein YLR162W (118 aa).

Residues 1–20 are compositionally biased toward polar residues; sequence MQHTLTRTASLPERSSSAHS. The disordered stretch occupies residues 1–26; the sequence is MQHTLTRTASLPERSSSAHSAATALP. Residues 38 to 58 form a helical membrane-spanning segment; the sequence is LVPLLCIFWFVFVSMSPLPPA.

Its subcellular location is the membrane. In terms of biological role, overexpression confers resistance to the antimicrobial peptide MiAMP1. This Saccharomyces cerevisiae (strain ATCC 204508 / S288c) (Baker's yeast) protein is Protein YLR162W.